The sequence spans 118 residues: Class I hydrophobin hum2 (118 aa).

The N-terminal stretch at 1–19 is a signal peptide; the sequence is MQFKTIFATLAAFAAVASA. Cystine bridges form between Cys33–Cys98, Cys40–Cys92, Cys41–Cys74, and Cys99–Cys112.

Belongs to the fungal hydrophobin family. As to quaternary structure, self-assembles to form functional amyloid fibrils called rodlets. Self-assembly into fibrillar rodlets occurs spontaneously at hydrophobic:hydrophilic interfaces and the rodlets further associate laterally to form amphipathic monolayers.

It is found in the secreted. The protein resides in the cell wall. Functionally, aerial growth, conidiation, and dispersal of filamentous fungi in the environment rely upon a capability of their secreting small amphipathic proteins called hydrophobins (HPBs) with low sequence identity. Class I can self-assemble into an outermost layer of rodlet bundles on aerial cell surfaces, conferring cellular hydrophobicity that supports fungal growth, development and dispersal; whereas Class II form highly ordered films at water-air interfaces through intermolecular interactions but contribute nothing to the rodlet structure. Hum2 is a class I hydrophobin which that plays a role in, but seems not to be crucial for the formation of aerial hyphae. Hydrophobins of Mycosarcoma maydis have been functionally replaced, at least partially, by repellents. The polypeptide is Class I hydrophobin hum2 (Mycosarcoma maydis (Corn smut fungus)).